Here is a 278-residue protein sequence, read N- to C-terminus: HTH-type transcriptional activator RhaS (278 aa).

Residues 174–272 (NLLLAWLEDH…NWSPRDIRQG (99 aa)) enclose the HTH araC/xylS-type domain. 2 consecutive DNA-binding regions (H-T-H motif) follow at residues 191 to 212 (DAVAEQFSLSLRTLHRQLKQQT) and 239 to 262 (VTDIAYRCGFSDSNHFSTLFRREF).

In terms of assembly, binds DNA as a dimer.

The protein resides in the cytoplasm. Activates expression of the rhaBAD and rhaT operons. This chain is HTH-type transcriptional activator RhaS, found in Escherichia coli O139:H28 (strain E24377A / ETEC).